A 331-amino-acid chain; its full sequence is Pantothenate kinase (331 aa).

109 to 116 lines the ATP pocket; that stretch reads GSVAVGKS.

This sequence belongs to the prokaryotic pantothenate kinase family.

The protein resides in the cytoplasm. The enzyme catalyses (R)-pantothenate + ATP = (R)-4'-phosphopantothenate + ADP + H(+). It functions in the pathway cofactor biosynthesis; coenzyme A biosynthesis; CoA from (R)-pantothenate: step 1/5. The protein is Pantothenate kinase of Rhizobium etli (strain CIAT 652).